Here is an 83-residue protein sequence, read N- to C-terminus: Putative regulatory protein FMG_0656 (83 aa).

Belongs to the RemA family.

The sequence is that of Putative regulatory protein FMG_0656 from Finegoldia magna (strain ATCC 29328 / DSM 20472 / WAL 2508) (Peptostreptococcus magnus).